The following is a 345-amino-acid chain: Myb/SANT-like DNA-binding domain-containing protein 4 (345 aa).

The region spanning 4–77 (LKRKRKSNFS…EVKRRYLDWR (74 aa)) is the Myb-like domain. A Glycyl lysine isopeptide (Lys-Gly) (interchain with G-Cter in SUMO2) cross-link involves residue Lys9. At Ser106 the chain carries Phosphoserine. Glycyl lysine isopeptide (Lys-Gly) (interchain with G-Cter in SUMO2) cross-links involve residues Lys114 and Lys142. The interval 139-175 (TEVKVEEEERDPQSPEFEIEEEEEMLSSVIPDSRREN) is disordered. Phosphothreonine is present on Thr188. Positions 202-344 (HLLMNIEKQK…RLRIQKEGHL (143 aa)) form a coiled coil. Residues Lys237, Lys254, and Lys273 each participate in a glycyl lysine isopeptide (Lys-Gly) (interchain with G-Cter in SUMO2) cross-link.

The chain is Myb/SANT-like DNA-binding domain-containing protein 4 (Msantd4) from Mus musculus (Mouse).